A 118-amino-acid chain; its full sequence is Large ribosomal subunit protein bL20 (118 aa).

This sequence belongs to the bacterial ribosomal protein bL20 family.

In terms of biological role, binds directly to 23S ribosomal RNA and is necessary for the in vitro assembly process of the 50S ribosomal subunit. It is not involved in the protein synthesizing functions of that subunit. This is Large ribosomal subunit protein bL20 from Gluconobacter oxydans (strain 621H) (Gluconobacter suboxydans).